The following is a 1145-amino-acid chain: Protein STU1 (1145 aa).

2 HEAT repeats span residues 96–134 (TLPL…EKYV) and 168–206 (YVPV…KSDL). Disordered stretches follow at residues 226-271 (ELIP…GIDT), 510-793 (LLNK…VVDP), and 816-839 (PEPV…PAAS). Over residues 229–239 (PTSSRPETPAA) the composition is skewed to low complexity. Polar residues predominate over residues 535-545 (SKSTMGTSKPS). Composition is skewed to low complexity over residues 580–594 (TTTT…SGAR), 663–676 (ASHA…SPSS), and 696–708 (QSQS…SSPS).

Belongs to the CLASP family. As to quaternary structure, interacts with microtubules.

It localises to the cytoplasm. The protein resides in the cytoskeleton. The protein localises to the nucleus. Its subcellular location is the spindle. In terms of biological role, microtubule binding protein that promotes the stabilization of dynamic microtubules. Required for mitotic spindle formation. The protein is Protein STU1 (STU1) of Gibberella zeae (strain ATCC MYA-4620 / CBS 123657 / FGSC 9075 / NRRL 31084 / PH-1) (Wheat head blight fungus).